Consider the following 262-residue polypeptide: Shikimate dehydrogenase (NADP(+)) (262 aa).

Shikimate is bound by residues 15 to 17 (SRS) and threonine 62. Lysine 66 serves as the catalytic Proton acceptor. Position 78 (glutamate 78) interacts with NADP(+). Asparagine 87 and aspartate 102 together coordinate shikimate. NADP(+) contacts are provided by residues 126 to 130 (GAGGA), 150 to 155 (NRTLAR), and methionine 214. Tyrosine 216 is a shikimate binding site. Glycine 236 is an NADP(+) binding site.

It belongs to the shikimate dehydrogenase family. Homodimer.

The catalysed reaction is shikimate + NADP(+) = 3-dehydroshikimate + NADPH + H(+). It functions in the pathway metabolic intermediate biosynthesis; chorismate biosynthesis; chorismate from D-erythrose 4-phosphate and phosphoenolpyruvate: step 4/7. Functionally, involved in the biosynthesis of the chorismate, which leads to the biosynthesis of aromatic amino acids. Catalyzes the reversible NADPH linked reduction of 3-dehydroshikimate (DHSA) to yield shikimate (SA). This is Shikimate dehydrogenase (NADP(+)) from Acinetobacter baumannii (strain SDF).